The sequence spans 212 residues: ATP-dependent dethiobiotin synthetase BioD (212 aa).

12 to 17 (DCGKTF) serves as a coordination point for ATP. Thr16 contacts Mg(2+). Lys33 is a catalytic residue. Substrate is bound at residue Ser37. ATP is bound by residues Asp50, 110-113 (EGAG), and 170-171 (NC). 2 residues coordinate Mg(2+): Asp50 and Glu110.

The protein belongs to the dethiobiotin synthetase family. In terms of assembly, homodimer. Requires Mg(2+) as cofactor.

It localises to the cytoplasm. The enzyme catalyses (7R,8S)-7,8-diammoniononanoate + CO2 + ATP = (4R,5S)-dethiobiotin + ADP + phosphate + 3 H(+). The protein operates within cofactor biosynthesis; biotin biosynthesis; biotin from 7,8-diaminononanoate: step 1/2. In terms of biological role, catalyzes a mechanistically unusual reaction, the ATP-dependent insertion of CO2 between the N7 and N8 nitrogen atoms of 7,8-diaminopelargonic acid (DAPA, also called 7,8-diammoniononanoate) to form a ureido ring. The protein is ATP-dependent dethiobiotin synthetase BioD of Legionella pneumophila subsp. pneumophila (strain Philadelphia 1 / ATCC 33152 / DSM 7513).